The following is a 181-amino-acid chain: Large ribosomal subunit protein uL5 (181 aa).

This sequence belongs to the universal ribosomal protein uL5 family. In terms of assembly, part of the 50S ribosomal subunit; contacts the 5S rRNA and probably tRNA. Forms a bridge to the 30S subunit in the 70S ribosome.

Its function is as follows. This is one of the proteins that bind and probably mediate the attachment of the 5S RNA into the large ribosomal subunit, where it forms part of the central protuberance. In the 70S ribosome it contacts protein S13 of the 30S subunit (bridge B1b), connecting the 2 subunits; this bridge is implicated in subunit movement. May contact the P site tRNA; the 5S rRNA and some of its associated proteins might help stabilize positioning of ribosome-bound tRNAs. In Methanococcus maripaludis (strain C5 / ATCC BAA-1333), this protein is Large ribosomal subunit protein uL5.